Consider the following 69-residue polypeptide: MMRVKCSICDKIETIDDDTLIAKRLRNRPIHTYMCQECHDRIAKKTEERLKTGKFTFHPGQQKKEKVKK.

This is an uncharacterized protein from Bacillus subtilis (strain 168).